A 326-amino-acid chain; its full sequence is Tryptophan--tRNA ligase (326 aa).

ATP is bound by residues 11–13 and 19–20; these read QPT and GN. The 'HIGH' region motif lies at 12–20; that stretch reads PTGQIHLGN. L-tryptophan is bound at residue aspartate 135. Residues 147-149, valine 186, and 195-199 contribute to the ATP site; these read GED and KMSKS. A 'KMSKS' region motif is present at residues 195-199; the sequence is KMSKS.

Belongs to the class-I aminoacyl-tRNA synthetase family. In terms of assembly, homodimer.

It is found in the cytoplasm. It carries out the reaction tRNA(Trp) + L-tryptophan + ATP = L-tryptophyl-tRNA(Trp) + AMP + diphosphate + H(+). Its function is as follows. Catalyzes the attachment of tryptophan to tRNA(Trp). The protein is Tryptophan--tRNA ligase of Helicobacter pylori (strain J99 / ATCC 700824) (Campylobacter pylori J99).